The sequence spans 303 residues: RELT-like protein 2 (303 aa).

Residues 15–35 (LYMLFLLVLVFFLMGLVGFMI) traverse the membrane as a helical segment. Disordered stretches follow at residues 46–67 (CRTSRGSEPDDAQLQPPEDDDM) and 132–303 (CLHC…AGSM). S52 carries the phosphoserine modification. Basic and acidic residues-rich tracts occupy residues 148 to 158 (RSKEGKSRPRT) and 172 to 188 (THIEKRYGLHEHRDGSP). A compositionally biased stretch (gly residues) spans 194-212 (GSGGGQDPGGGQGSGGGQP). Residues 278–296 (QEANGQPSKPDTSDHQVSL) are compositionally biased toward polar residues.

Belongs to the RELT family. In terms of assembly, interacts with RELT, RELL1 and OXSR1. Interacts with PLSCR1. Interacts with TRAF2. In terms of processing, phosphorylated in vitro by OXSR1. In terms of tissue distribution, primarily expressed in spleen, thymus, testis, peripheral blood leukocytes, brain and placenta. Not detected in prostate, ovary, small intestine, colon, heart, lung, liver, skeletal muscle, kidney and pancreas.

It is found in the cell membrane. Functionally, induces activation of MAPK14/p38 cascade, when overexpressed. Induces apoptosis, when overexpressed. The protein is RELT-like protein 2 (RELL2) of Homo sapiens (Human).